The primary structure comprises 255 residues: Imidazole glycerol phosphate synthase subunit HisF (255 aa).

Active-site residues include aspartate 12 and aspartate 131.

Belongs to the HisA/HisF family. As to quaternary structure, heterodimer of HisH and HisF.

The protein localises to the cytoplasm. It carries out the reaction 5-[(5-phospho-1-deoxy-D-ribulos-1-ylimino)methylamino]-1-(5-phospho-beta-D-ribosyl)imidazole-4-carboxamide + L-glutamine = D-erythro-1-(imidazol-4-yl)glycerol 3-phosphate + 5-amino-1-(5-phospho-beta-D-ribosyl)imidazole-4-carboxamide + L-glutamate + H(+). Its pathway is amino-acid biosynthesis; L-histidine biosynthesis; L-histidine from 5-phospho-alpha-D-ribose 1-diphosphate: step 5/9. Functionally, IGPS catalyzes the conversion of PRFAR and glutamine to IGP, AICAR and glutamate. The HisF subunit catalyzes the cyclization activity that produces IGP and AICAR from PRFAR using the ammonia provided by the HisH subunit. The chain is Imidazole glycerol phosphate synthase subunit HisF from Neisseria meningitidis serogroup C / serotype 2a (strain ATCC 700532 / DSM 15464 / FAM18).